A 438-amino-acid polypeptide reads, in one-letter code: Protein DAY-LENGTH-DEPENDENT DELAYED-GREENING 1, chloroplastic (438 aa).

The N-terminal 54 residues, 1 to 54, are a transit peptide targeting the chloroplast; sequence MSLMSSSMVLCHCLSFSSQNPDPESSSSSLLRYKPCDSISLWGKRRKKLWRFVP. A run of 4 helical transmembrane segments spans residues 216 to 236, 314 to 334, 359 to 379, and 398 to 418; these read FLAVLILIPWALDFLAHDYLL, AFANIWSDMVFGISLFVLLYA, AFLIILITDIFLGYHSESGWE, and ITIFICLVPVIMDACVKLWLF.

Belongs to the CemA family.

It is found in the plastid. Its subcellular location is the chloroplast envelope. The protein resides in the chloroplast membrane. It catalyses the reaction K(+)(in) + H(+)(out) = K(+)(out) + H(+)(in). It carries out the reaction Ca(2+)(in) + H(+)(out) = Ca(2+)(out) + H(+)(in). Its function is as follows. Promotes K(+)/H(+) antiport activity supporting K(+) efflux to control H(+) homeostasis in chloroplasts. Also able to ensure Ca(2+)/H(+) antiport activity in vitro. Essential for chloroplast pH regulation and optimization of non-photochemical quenching (NPQ), a regulatory mechanism that dissipates excess light energy; acts downstream of PSBS but independently from PGR5 and FLAP1. This is Protein DAY-LENGTH-DEPENDENT DELAYED-GREENING 1, chloroplastic from Arabidopsis thaliana (Mouse-ear cress).